The chain runs to 352 residues: DNA ADP-ribosyl glycohydrolase (352 aa).

The region spanning 1-155 is the Macro domain; it reads MITYGSGDLL…IYPPSGGSRA (155 aa). ADP-D-ribose is bound by residues 8–9, 20–22, 31–34, and T79; these read DL, TVN, and IALQ. K80 acts as the Nucleophile in catalysis. 117–121 serves as a coordination point for ADP-D-ribose; sequence GVGNG. The interaction with DarT stretch occupies residues 164–352; the sequence is MTWGRAVILE…VALDRILMTA (189 aa).

Belongs to the DarG ADP-ribosyl glycohydrolase family. In terms of assembly, interacts (via C-terminus) with cognate toxin DarT; this heterodimeric complex neutralizes the toxic effect of DarT by preventing ssDNA binding to DarT and consequently inactivating the toxin by direct protein-protein interactions.

The enzyme catalyses an N-(ADP-alpha-D-ribosyl)-thymidine in DNA + H2O = a thymidine in DNA + ADP-D-ribose. Its function is as follows. Antitoxin component of the hybrid type II/IV toxin-antitoxin (TA) system DarTG, which plays a crucial role in controlling bacterial growth and bacteriophage infection. De-ADP-ribosylates DNA (probably) modified on thymidine by its cognate toxin DarT, which neutralizes the activity of cognate toxin DarT. This is DNA ADP-ribosyl glycohydrolase from Mycobacterium bovis (strain BCG / Pasteur 1173P2).